Here is a 424-residue protein sequence, read N- to C-terminus: MDKFRVYGQSRLSGSVNISGAKNAALPILFAAILATEPVKLTNVPELKDIETTLNILRQLGVIANRDETGAVLLDASNINHFTAPYELVKTMRASIWALAPLVARFHQGQVSLPGGCSIGARPVDLHISGLEKLGADIVLEEGYVKAQVSDRLVGTRIVIEKVSVGATLSIMMAATLAKGTTVIENAAREPEIVDTADFLNKMGAKITGAGSDHITIEGVERLTGCEHSVVPDRIETGTFLIAAAISGGRVVCQNTKADTLDAVIDKLREAGAQVDVTENSITLDMLGNRPKAVNIRTAPHPGFPTDMQAQFTLLNMVAEGTSIITETIFENRFMHIPELIRMGGKAEIEGNTAVCHGVEQLSGTEVIATDLRASISLVLAGCIATGETIVDRIYHIDRGYEHIEDKLRGLGAKIERFSGSDEA.

22-23 (KN) provides a ligand contact to phosphoenolpyruvate. R93 provides a ligand contact to UDP-N-acetyl-alpha-D-glucosamine. C117 functions as the Proton donor in the catalytic mechanism. C117 carries the 2-(S-cysteinyl)pyruvic acid O-phosphothioketal modification. UDP-N-acetyl-alpha-D-glucosamine-binding positions include 122 to 126 (RPVDL), 162 to 165 (KVSV), D307, and I329.

This sequence belongs to the EPSP synthase family. MurA subfamily.

It is found in the cytoplasm. It catalyses the reaction phosphoenolpyruvate + UDP-N-acetyl-alpha-D-glucosamine = UDP-N-acetyl-3-O-(1-carboxyvinyl)-alpha-D-glucosamine + phosphate. The protein operates within cell wall biogenesis; peptidoglycan biosynthesis. Its function is as follows. Cell wall formation. Adds enolpyruvyl to UDP-N-acetylglucosamine. This Haemophilus influenzae (strain PittEE) protein is UDP-N-acetylglucosamine 1-carboxyvinyltransferase.